The following is an 89-amino-acid chain: Glutamyl-tRNA(Gln) amidotransferase subunit C (89 aa).

The protein belongs to the GatC family. In terms of assembly, heterotrimer of A, B and C subunits.

The enzyme catalyses L-glutamyl-tRNA(Gln) + L-glutamine + ATP + H2O = L-glutaminyl-tRNA(Gln) + L-glutamate + ADP + phosphate + H(+). It catalyses the reaction L-aspartyl-tRNA(Asn) + L-glutamine + ATP + H2O = L-asparaginyl-tRNA(Asn) + L-glutamate + ADP + phosphate + 2 H(+). Its function is as follows. Allows the formation of correctly charged Asn-tRNA(Asn) or Gln-tRNA(Gln) through the transamidation of misacylated Asp-tRNA(Asn) or Glu-tRNA(Gln) in organisms which lack either or both of asparaginyl-tRNA or glutaminyl-tRNA synthetases. The reaction takes place in the presence of glutamine and ATP through an activated phospho-Asp-tRNA(Asn) or phospho-Glu-tRNA(Gln). The sequence is that of Glutamyl-tRNA(Gln) amidotransferase subunit C from Thermus thermophilus (strain ATCC 27634 / DSM 579 / HB8).